Here is a 254-residue protein sequence, read N- to C-terminus: Cdc42 effector protein 3 (254 aa).

The region spanning 31 to 45 is the CRIB domain; that stretch reads ISPPLGDFRHTIHIG. Tyr63 carries the post-translational modification Phosphotyrosine. Ser89, Ser108, and Ser144 each carry phosphoserine. A disordered region spans residues 165-205; it reads VHQGDTSWGSSGSGSQSSQGRDSHSSSLSEQSSDWPADDMF. Over residues 171 to 197 the composition is skewed to low complexity; the sequence is SWGSSGSGSQSSQGRDSHSSSLSEQSS.

It belongs to the BORG/CEP family. Interacts with RHOQ and CDC42, in a GTP-dependent manner, and with SEPT7.

The protein resides in the endomembrane system. It localises to the cytoplasm. The protein localises to the cytoskeleton. Functionally, probably involved in the organization of the actin cytoskeleton. May act downstream of CDC42 to induce actin filament assembly leading to cell shape changes. Induces pseudopodia formation in fibroblasts. In Mus musculus (Mouse), this protein is Cdc42 effector protein 3 (Cdc42ep3).